A 214-amino-acid chain; its full sequence is Cell division protein DamX (214 aa).

2 stretches are compositionally biased toward polar residues: residues 1-14 and 43-53; these read GSGT…QPQQ and QGMTGAASTLP. The disordered stretch occupies residues 1–133; that stretch reads GSGTPTEAQT…SVQSAPGSHY (133 aa). A helical transmembrane segment spans residues 44–65; sequence GMTGAASTLPTAPATVMSGAAA. Low complexity-rich tracts occupy residues 78–97 and 110–131; these read QQHK…TQHK and SSTA…APGS. The region spanning 127-204 is the SPOR domain; the sequence is SAPGSHYTLQ…VQAKKPWVRP (78 aa).

It belongs to the DamX family.

Its subcellular location is the cell inner membrane. Functionally, non-essential cell division protein. This Serratia marcescens protein is Cell division protein DamX.